The following is a 110-amino-acid chain: Cell division protein FtsB (110 aa).

Over 1 to 3 (MRL) the chain is Cytoplasmic. Residues 4 to 21 (IILCLAALVLLIQFPLWL) traverse the membrane as a helical segment. Over 22–110 (GKGGWLRVWD…PPKIEPKEKR (89 aa)) the chain is Periplasmic. Positions 31 to 64 (DLDQQVIAAQKKNDELRARNAKLNSEVQDLKEGT) form a coiled coil.

Belongs to the FtsB family. In terms of assembly, part of a complex composed of FtsB, FtsL and FtsQ.

It is found in the cell inner membrane. Its function is as follows. Essential cell division protein. May link together the upstream cell division proteins, which are predominantly cytoplasmic, with the downstream cell division proteins, which are predominantly periplasmic. The polypeptide is Cell division protein FtsB (Herminiimonas arsenicoxydans).